The sequence spans 338 residues: Phosphate acyltransferase (338 aa).

It belongs to the PlsX family. Homodimer. Probably interacts with PlsY.

Its subcellular location is the cytoplasm. It carries out the reaction a fatty acyl-[ACP] + phosphate = an acyl phosphate + holo-[ACP]. It functions in the pathway lipid metabolism; phospholipid metabolism. Functionally, catalyzes the reversible formation of acyl-phosphate (acyl-PO(4)) from acyl-[acyl-carrier-protein] (acyl-ACP). This enzyme utilizes acyl-ACP as fatty acyl donor, but not acyl-CoA. This is Phosphate acyltransferase from Alcanivorax borkumensis (strain ATCC 700651 / DSM 11573 / NCIMB 13689 / SK2).